The following is a 1447-amino-acid chain: MVTKPSHNLRREHKWLKETATLQEDKDFVFQAIQKHIANKRPKTNSPPTTPSKDECGPGTTNFITSIPASGPTNTATKQHEVMQTLSNDTEWLSYTATSNQYADVPMVDIPASTSVVSNPRTPNGSKTHNFNTFRPHMASSLVENDSSRNLGSRNNNKSVIDNSSIGKQLENDIKLEVIRLQGSLIMALKEQSKLLLQKCSIIESTSLSEDAKRLQLSRDIRPQLSNMSIRIDSLEKEIIKAKKDGMSKDQSKGRSQVSSQDDNIISSILPSPLEYNTSSRNSNLTSTTATTVTKALAITGAKQNITNNTGKNSNNDSNNDDLIQVLDDEDDIDCDPPVILKEGAPHSPAFPHLHMTSEEQDELTRRRNMRSREPVNYRIPDRDDPFDYVMGKSLRDDYPDVEREEDELTMEAEDDAHSSYMTTRDEEKEENELLNQSDFDFVVNDDLDPTQDTDYHDNMDVSANIQESSQEGDTRSTITLSQNKNVQVILSSPTAQSVPSNGQNQIGVEHIDLLEDDLEKDAILDDSMSFSFGRQHMPMSHSDLELIDSEKENEDFEEDNNNNGIEYLSDSDLERFDEERENRTQVADIQELDNDLKIITERKLTGDNEHPPPSWSPKIKREKSSVSQKDEEDDFDDDFSLSDIVSKSNLSSKTNGPTYPWSDEVLYRLHEVFKLPGFRPNQLEAVNATLQGKDVFVLMPTGGGKSLCYQLPAVVKSGKTHGTTIVISPLISLMQDQVEHLLNKNIKASMFSSRGTAEQRRQTFNLFINGLLDLVYISPEMISASEQCKRAISRLYADGKLARIVVDEAHCVSNWGHDFRPDYKELKFFKREYPDIPMIALTATASEQVRMDIIHNLELKEPVFLKQSFNRTNLYYEVNKKTKNTIFEICDAVKSRFKNQTGIIYCHSKKSCEQTSAQMQRNGIKCAYYHAGMEPDERLSVQKAWQADEIQVICATVAFGMGIDKPDVRFVYHFTVPRTLEGYYQETGRAGRDGNYSYCITYFSFRDIRTMQTMIQKDKNLDRENKEKHLNKLQQVMAYCDNVTDCRRKLVLSYFNEDFDSKLCHKNCDNCRNSANVINEERDVTEPAKKIVKLVESIQNERVTIIYCQDVFKGSRSSKIVQANHDTLEEHGIGKSMQKSEIERIFFHLITIRVLQEYSIMNNSGFASSYVKVGPNAKKLLTGKMEIKMQFTISAPNSRPSTSSSFQANEDNIPVIAQKSTTIGGNVAANPPRFISAKEHLRSYTYGGSTMGSSHPITLKNTSDLRSTQELNNLRMTYERLRELSLNLGNRMVPPVGNFMPDSILKKMAAILPMNDSAFATLGTVEDKYRRRFKYFKATIADLSKKRSSEDHEKYDTILNDEFVNRAAASSNGIAQSTGTKSKFFGANLNEAKENEQIINQIRQSQLPKNTTSSKSGTRSISKSSKKSANGRRGFRNYRGHYRGRK.

Disordered regions lie at residues 37-78 (IANK…TATK), 243-264 (KKDG…QDDN), 342-430 (KEGA…EEKE), 552-572 (KENE…LSDS), and 601-639 (TERK…FDDD). Positions 59-78 (GTTNFITSIPASGPTNTATK) are enriched in polar residues. Residues 243–253 (KKDGMSKDQSK) show a composition bias toward basic and acidic residues. A compositionally biased stretch (polar residues) spans 254–264 (GRSQVSSQDDN). Residues 363-386 (ELTRRRNMRSREPVNYRIPDRDDP) show a composition bias toward basic and acidic residues. 2 stretches are compositionally biased toward acidic residues: residues 403 to 415 (EREE…EAED) and 552 to 561 (KENEDFEEDN). Residues 601–611 (TERKLTGDNEH) are compositionally biased toward basic and acidic residues. Positions 687–864 (VNATLQGKDV…IHNLELKEPV (178 aa)) constitute a Helicase ATP-binding domain. 714 to 721 (AVVKSGKT) contacts ATP. Residues 808–811 (DEAH) carry the DEAH box motif. The Helicase C-terminal domain maps to 886–1035 (TIFEICDAVK…NKEKHLNKLQ (150 aa)). Residues 1272–1351 (LNNLRMTYER…ADLSKKRSSE (80 aa)) form the HRDC domain. Positions 1402 to 1411 (QIRQSQLPKN) are enriched in polar residues. The interval 1402–1447 (QIRQSQLPKNTTSSKSGTRSISKSSKKSANGRRGFRNYRGHYRGRK) is disordered. Residues 1412-1424 (TTSSKSGTRSISK) are compositionally biased toward low complexity. Basic residues predominate over residues 1425–1447 (SSKKSANGRRGFRNYRGHYRGRK).

This sequence belongs to the helicase family. RecQ subfamily. In terms of assembly, heterodimer with TOP3. Forms a complex with TOP3 and RMI1. Forms a ternary complex with a MLH1-MLH3 heterodimer (MutLbeta) during meiosis. Interacts with TOP2. Mg(2+) serves as cofactor.

The protein resides in the nucleus. Its subcellular location is the nucleolus. It carries out the reaction Couples ATP hydrolysis with the unwinding of duplex DNA by translocating in the 3'-5' direction.. The catalysed reaction is ATP + H2O = ADP + phosphate + H(+). Its activity is regulated as follows. Helicase activity on G-quadruplex DNA is inhibited by ATP-gamma-S. ATP-dependent 3'-5' DNA helicase able to unwind duplex DNA or DNA:RNA heteroduplex. Unwinds G-quadruplex DNA; unwinding occurs in the 3'-5' direction, requires a 3' single-stranded end of at least 7 nucleotides. Helicase activity is higher on G-quadruplex substrates than on duplex DNA substrates. Assayed with a catalytic fragment (residues 400-1268). Telomeres and rDNA are notably G-rich; formation of G-quadruplex DNA would block DNA replication and transcription. Acts as an integral component of the S-phase checkpoint response, which arrests cells due to DNA damage or blocked fork progression during DNA replication. Can create a deleterious topological substrate that TOP3 preferentially resolves. The TOP3-SGS1 protein complex may function as a eukaryotic reverse gyrase introducing positive supercoils into extrachromosomal ribosomal DNA rings. Together with topoisomerase II has a role in chromosomal segregation. Maintains rDNA structure where it has a role in re-starting stalled replication forks. This is ATP-dependent helicase SGS1 from Saccharomyces cerevisiae (strain ATCC 204508 / S288c) (Baker's yeast).